The chain runs to 218 residues: Glutathione S-transferase Mu 1 (218 aa).

Residues 2-88 form the GST N-terminal domain; it reads PMTLGYWDIR…YIARKHNLCG (87 aa). Residue 7–8 participates in glutathione binding; it reads YW. Threonine 34 carries the phosphothreonine modification. Glutathione contacts are provided by residues 43–46, lysine 50, 59–60, and 72–73; these read RSQW, NL, and QS. One can recognise a GST C-terminal domain in the interval 90–208; the sequence is TEEEKIRVDI…KSSRFLPKPL (119 aa). Tyrosine 116 serves as a coordination point for substrate.

This sequence belongs to the GST superfamily. Mu family. Homodimer.

Its subcellular location is the cytoplasm. The enzyme catalyses RX + glutathione = an S-substituted glutathione + a halide anion + H(+). It carries out the reaction prostaglandin A2 + glutathione = prostaglandin A2-S-(R)-glutathione. It catalyses the reaction prostaglandin J2 + glutathione = prostaglandin J2-S-(R)-glutathione. The catalysed reaction is prostaglandin J2 + glutathione = prostaglandin J2-S-(S)-glutathione. The enzyme catalyses prostaglandin A2 + glutathione = prostaglandin A2-S-(S)-glutathione. It carries out the reaction 11(S)-hydroxy-14(S),15(S)-epoxy-(5Z,8Z,12E)-eicosatrienoate + glutathione = (11S,15S)-dihydroxy-14(R)-S-glutathionyl-(5Z,8Z,12E)-eicosatrienoate. Functionally, conjugation of reduced glutathione to a wide number of exogenous and endogenous hydrophobic electrophiles. Involved in the formation of glutathione conjugates of both prostaglandin A2 (PGA2) and prostaglandin J2 (PGJ2). Participates in the formation of novel hepoxilin regioisomers. This Macaca fascicularis (Crab-eating macaque) protein is Glutathione S-transferase Mu 1 (GSTM1).